Reading from the N-terminus, the 156-residue chain is Transcription antitermination protein NusB (156 aa).

The protein belongs to the NusB family.

Involved in transcription antitermination. Required for transcription of ribosomal RNA (rRNA) genes. Binds specifically to the boxA antiterminator sequence of the ribosomal RNA (rrn) operons. This Rickettsia rickettsii (strain Iowa) protein is Transcription antitermination protein NusB.